The sequence spans 160 residues: MSILKKPDLTDPKLRAKLAKGMGHNYYGEPAWPNDLLYVFPVVILGTIACSIGLAILEPSSLGEKSNPFATPLEILPEWYFFPTFNLLRVIPNKLLGVLSMAAVPAGLLTVPFIENVNKFQNPFRRPIATTIFLISTVITIWLGIGATMPINNAITLGLF.

Helical transmembrane passes span 36 to 56 (LLYV…GLAI), 95 to 115 (LLGV…PFIE), and 131 to 151 (TIFL…TMPI).

This sequence belongs to the cytochrome b family. PetD subfamily. In terms of assembly, the 4 large subunits of the cytochrome b6-f complex are cytochrome b6, subunit IV (17 kDa polypeptide, petD), cytochrome f and the Rieske protein, while the 4 small subunits are petG, petL, petM and petN. The complex functions as a dimer.

It is found in the plastid. Its subcellular location is the chloroplast thylakoid membrane. In terms of biological role, component of the cytochrome b6-f complex, which mediates electron transfer between photosystem II (PSII) and photosystem I (PSI), cyclic electron flow around PSI, and state transitions. The polypeptide is Cytochrome b6-f complex subunit 4 (Porphyra purpurea (Red seaweed)).